A 156-amino-acid chain; its full sequence is MASKFFSNLFGVVDDEPETADYYEDQQPAQQAPAPVPTPAPTRSNKVVSINNARVAPQPNSSSKIELVEPRVYGDGKEIVNHLLNGNAVIVNFDQMDAKVAFRIVEYMKGATYAISGKIERIDAEIFLCTPQNFEISGKLAPTLSSDGLDDRGDRY.

Positions 17-44 (PETADYYEDQQPAQQAPAPVPTPAPTRS) are disordered.

Belongs to the SepF family. As to quaternary structure, homodimer. Interacts with FtsZ.

Its subcellular location is the cytoplasm. Functionally, cell division protein that is part of the divisome complex and is recruited early to the Z-ring. Probably stimulates Z-ring formation, perhaps through the cross-linking of FtsZ protofilaments. Its function overlaps with FtsA. This is Cell division protein SepF from Limosilactobacillus fermentum (strain NBRC 3956 / LMG 18251) (Lactobacillus fermentum).